The sequence spans 678 residues: Nucleolar protein 9 (678 aa).

Basic residues predominate over residues 1–15; the sequence is MPRDKQKRGRRAEAK. Residues 1–24 are disordered; the sequence is MPRDKQKRGRRAEAKRKRDDVITD. 3 Pumilio repeats span residues 108-143, 291-334, and 382-419; these read EANG…RLFS, GLDN…SLLR, and KILV…SAMD. A disordered region spans residues 477-496; sequence QRSNQESDGTTSSSNTSSPE. 2 Pumilio repeats span residues 524–562 and 563–600; these read AVTT…QITS and RFSG…RFAE.

It localises to the nucleus. The protein localises to the nucleolus. In terms of biological role, RNA-binding nucleolar protein required for pre-rRNA processing. Involved in production of 18S rRNA and assembly of small ribosomal subunit. This Paracoccidioides brasiliensis (strain Pb18) protein is Nucleolar protein 9 (NOP9).